A 949-amino-acid polypeptide reads, in one-letter code: MKYLASFRTTLKASRYMFRALALVLWLLIAFSSVFYIVNALHQRESEIRQEFNLSSDQAQRFIQRTSDVMKELKYIAENRLSAENGVLSPRGRETQADVPAFEPLFADSDCSAMSNTWRGSLESLAWFIGYWRDNFSAAYDLNRVFLIGSDNLCMANFGLRDMPVERDTALKALHERINKYRNAPQDDSGSNLYWISEGPRPGVGYFYALTPVYLANRLQALLGVEQTIRMENFFLPGTLPMGVTILDENGHTLISLTGPESKIKGDPRWMQERSWFGYTEGFRELVLKKNLPPSSLSIVYSVPVDKVLERIRMVILNAILLNVLAGAALFTLARMYERRIFIPAESDALRLEEHEQFNRKIVASAPVGICILRTADGVNILSNELAHTYLNMLTHEDRQRLTQIICGQQVNFVDVLTSNNTNLQISFVHSRYRNENVAICVLVDVSSRVKMEESLQEMAQAAEQASQSKSMFLATVSHELRTPLYGIIGNLDLLQTKELPKGVDRLVTAMNNSSSLLLKIISDILDFSKIESEQLKIEPREFSPREVMNHITANYLPLVVRKQLGLYCFIEPDVPVALNGDPMRLQQVISNLLSNAIKFTDTGCIVLHVRADGDYLSIRVRDTGVGIPAKEVVRLFDPFFQVGTGVQRNFQGTGLGLAICEKLISMMDGDISVDSEPGMGSQFTVRIPLYGAQYPQKKGVEGLSGKRCWLAVRNASLCQFLETSLQRSGIVVTTYEGQEPTPEDVLITDEVVSKKWQGRAVVTFCRRHIGIPLEEAPGEWVHSVAAPHELPALLARIYLIEMESDDPANALPSTDKAVSDNDDMMILVVDDHPINRRLLADQLGSLGYQCKTANDGVDALNVLSKNHIDIVLSDVNMPNMDGYRLTQRTRQLGLTLPVIGVTANALAEEKQRCLESGMDSCLSKPVTLDVIKQTLTVYAERVRKSRES.

Topologically, residues 1–19 are cytoplasmic; that stretch reads MKYLASFRTTLKASRYMFR. The helical transmembrane segment at 20 to 41 threads the bilayer; sequence ALALVLWLLIAFSSVFYIVNAL. Residues 42–313 are Periplasmic-facing; sequence HQRESEIRQE…PVDKVLERIR (272 aa). The chain crosses the membrane as a helical span at residues 314–335; that stretch reads MVILNAILLNVLAGAALFTLAR. Residues 336-949 lie on the Cytoplasmic side of the membrane; that stretch reads MYERRIFIPA…AERVRKSRES (614 aa). In terms of domain architecture, PAS spans 357 to 425; that stretch reads QFNRKIVASA…VLTSNNTNLQ (69 aa). The Histidine kinase domain maps to 476–692; it reads TVSHELRTPL…QFTVRIPLYG (217 aa). His-479 carries the post-translational modification Phosphohistidine; by autocatalysis. In terms of domain architecture, ABL spans 705 to 805; sequence SGKRCWLAVR…ARIYLIEMES (101 aa). Residues 826 to 940 form the Response regulatory domain; that stretch reads MILVVDDHPI…VIKQTLTVYA (115 aa). Asp-875 is subject to 4-aspartylphosphate.

It belongs to the RcsC family. In terms of assembly, interacts with RcsD. Autophosphorylated. Activation probably requires a transfer of a phosphate group from a His in the transmitter domain to an Asp in the receiver domain.

Its subcellular location is the cell inner membrane. The enzyme catalyses ATP + protein L-histidine = ADP + protein N-phospho-L-histidine.. In terms of biological role, component of the Rcs signaling system, which controls transcription of numerous genes. RcsC functions as a membrane-associated protein kinase that phosphorylates RcsD in response to environmental signals. The phosphoryl group is then transferred to the response regulator RcsB. Involved in regulation of K30 capsular polysaccharide synthesis. This chain is Sensor histidine kinase RcsC, found in Escherichia coli.